Here is a 260-residue protein sequence, read N- to C-terminus: MLRQFCIQVVIVSTQSKANFTPRRGGFTFKQFFVAHDRCAMKVGTDGVLLGAWAPLAQAQRVLDIGSGSGLIALMLAQRTAENVQIDAVELDEAAAAQAHDNVLESPWSLRIQVHAQDIHHFAQHHAGQYDLIVSNPPYFEPAVACRDQARHNARYTETLTHDALLASAEQLIVPQGTFCVVLPHDIGEAFETNAHRRGWHTAQRLNVSDRADTPMHRVLLALTRQPAEEATEQKLAIKLADGSYTDDFRRLITDFYLFY.

The protein belongs to the methyltransferase superfamily. tRNA (adenine-N(6)-)-methyltransferase family.

It is found in the cytoplasm. The enzyme catalyses adenosine(37) in tRNA1(Val) + S-adenosyl-L-methionine = N(6)-methyladenosine(37) in tRNA1(Val) + S-adenosyl-L-homocysteine + H(+). In terms of biological role, specifically methylates the adenine in position 37 of tRNA(1)(Val) (anticodon cmo5UAC). The polypeptide is tRNA1(Val) (adenine(37)-N6)-methyltransferase (Serratia proteamaculans (strain 568)).